A 377-amino-acid polypeptide reads, in one-letter code: Alanine racemase (377 aa).

Lys37 acts as the Proton acceptor; specific for D-alanine in catalysis. Lys37 is modified (N6-(pyridoxal phosphate)lysine). Substrate is bound at residue Arg135. Tyr271 functions as the Proton acceptor; specific for L-alanine in the catalytic mechanism. Met319 contacts substrate.

The protein belongs to the alanine racemase family. It depends on pyridoxal 5'-phosphate as a cofactor.

The enzyme catalyses L-alanine = D-alanine. It functions in the pathway amino-acid biosynthesis; D-alanine biosynthesis; D-alanine from L-alanine: step 1/1. Catalyzes the interconversion of L-alanine and D-alanine. May also act on other amino acids. The protein is Alanine racemase (alr) of Helicobacter acinonychis (strain Sheeba).